A 152-amino-acid chain; its full sequence is MAKRVQLVLNQDISKLGKSGDLVEVAPGYARNYLIPQKLATNATPGILKQVERRREQERQRQLELRQQALEQKESLEKVGSLTIAKQVGENEAIFGTITTQDVADAIKAATGQEVDRRGITIPDINHLGTYQAEIKLYSDVAAQVDIQVVAS.

This sequence belongs to the bacterial ribosomal protein bL9 family.

Its function is as follows. Binds to the 23S rRNA. The sequence is that of Large ribosomal subunit protein bL9 from Nostoc punctiforme (strain ATCC 29133 / PCC 73102).